A 112-amino-acid chain; its full sequence is Ribonuclease VapC8 (112 aa).

The 100-residue stretch at 10-109 folds into the PINc domain; sequence LLDTSVFIAR…TDALIAATAE (100 aa). Mg(2+)-binding residues include aspartate 12 and aspartate 101.

Belongs to the PINc/VapC protein family. Requires Mg(2+) as cofactor.

Toxic component of a type II toxin-antitoxin (TA) system. An RNase. The cognate antitoxin is VapB8. The protein is Ribonuclease VapC8 (vapC8) of Mycobacterium tuberculosis (strain CDC 1551 / Oshkosh).